Consider the following 509-residue polypeptide: ATP synthase subunit alpha (509 aa).

169-176 (GDRQTGKT) provides a ligand contact to ATP.

The protein belongs to the ATPase alpha/beta chains family. F-type ATPases have 2 components, CF(1) - the catalytic core - and CF(0) - the membrane proton channel. CF(1) has five subunits: alpha(3), beta(3), gamma(1), delta(1), epsilon(1). CF(0) has three main subunits: a(1), b(2) and c(9-12). The alpha and beta chains form an alternating ring which encloses part of the gamma chain. CF(1) is attached to CF(0) by a central stalk formed by the gamma and epsilon chains, while a peripheral stalk is formed by the delta and b chains.

The protein localises to the cell inner membrane. It catalyses the reaction ATP + H2O + 4 H(+)(in) = ADP + phosphate + 5 H(+)(out). Functionally, produces ATP from ADP in the presence of a proton gradient across the membrane. The alpha chain is a regulatory subunit. In Sinorhizobium fredii (strain NBRC 101917 / NGR234), this protein is ATP synthase subunit alpha.